A 341-amino-acid chain; its full sequence is tRNA-specific 2-thiouridylase MnmA (341 aa).

ATP-binding positions include 8–15 (GMSGGVDS) and Met34. Catalysis depends on Cys94, which acts as the Nucleophile. Cys94 and Cys188 are oxidised to a cystine. Position 118 (Gly118) interacts with ATP. The tract at residues 136–138 (KDQ) is interaction with tRNA. The active-site Cysteine persulfide intermediate is the Cys188. Residues 290–291 (RY) are interaction with tRNA.

It belongs to the MnmA/TRMU family.

Its subcellular location is the cytoplasm. It carries out the reaction S-sulfanyl-L-cysteinyl-[protein] + uridine(34) in tRNA + AH2 + ATP = 2-thiouridine(34) in tRNA + L-cysteinyl-[protein] + A + AMP + diphosphate + H(+). Catalyzes the 2-thiolation of uridine at the wobble position (U34) of tRNA, leading to the formation of s(2)U34. The sequence is that of tRNA-specific 2-thiouridylase MnmA from Sulfurimonas denitrificans (strain ATCC 33889 / DSM 1251) (Thiomicrospira denitrificans (strain ATCC 33889 / DSM 1251)).